Reading from the N-terminus, the 75-residue chain is Small ribosomal subunit protein bS18 (75 aa).

Belongs to the bacterial ribosomal protein bS18 family. Part of the 30S ribosomal subunit. Forms a tight heterodimer with protein bS6.

Its function is as follows. Binds as a heterodimer with protein bS6 to the central domain of the 16S rRNA, where it helps stabilize the platform of the 30S subunit. The chain is Small ribosomal subunit protein bS18 from Saccharophagus degradans (strain 2-40 / ATCC 43961 / DSM 17024).